The primary structure comprises 305 residues: Protein FdhE homolog (305 aa).

It belongs to the FdhE family.

It localises to the cytoplasm. Functionally, necessary for formate dehydrogenase activity. In Stutzerimonas stutzeri (strain A1501) (Pseudomonas stutzeri), this protein is Protein FdhE homolog.